The primary structure comprises 239 residues: Hexuronic acid methyltransferase AglP (239 aa).

This sequence belongs to the FkbM methyltransferase family.

The protein localises to the cytoplasm. Its pathway is cell surface structure biogenesis; S-layer biogenesis. Its function is as follows. Involved in the assembly of a N-linked pentasaccharide that decorates the S-layer glycoprotein and flagellins. S-adenosyl-L-methionine-dependent methyltransferase that modifies the hexuronic acid found at position 4 of the pentasaccharide. In Haloferax volcanii (strain ATCC 29605 / DSM 3757 / JCM 8879 / NBRC 14742 / NCIMB 2012 / VKM B-1768 / DS2) (Halobacterium volcanii), this protein is Hexuronic acid methyltransferase AglP (aglP).